Consider the following 75-residue polypeptide: MKTLFIALIRGYQKFISPLTPPTCRFYPTCSQYGIEAIKTHGALKGGWLTIKRILKCHPFHPGGVDPVPEKKQKH.

It belongs to the UPF0161 family.

The protein localises to the cell membrane. In terms of biological role, could be involved in insertion of integral membrane proteins into the membrane. This Bacillus subtilis (strain 168) protein is Putative membrane protein insertion efficiency factor (ytjA).